The primary structure comprises 161 residues: Cytochrome c-type biogenesis protein CcmE (161 aa).

The Cytoplasmic segment spans residues 1 to 8 (MNARRKKR). The helical; Signal-anchor for type II membrane protein transmembrane segment at 9–29 (LTLAVALIGGVAAIASLLLYA) threads the bilayer. Residues 30–161 (LNSNLNLFYT…DYNEQQKTSY (132 aa)) lie on the Periplasmic side of the membrane. H131 and Y135 together coordinate heme.

This sequence belongs to the CcmE/CycJ family.

The protein resides in the cell inner membrane. Heme chaperone required for the biogenesis of c-type cytochromes. Transiently binds heme delivered by CcmC and transfers the heme to apo-cytochromes in a process facilitated by CcmF and CcmH. The sequence is that of Cytochrome c-type biogenesis protein CcmE from Shewanella sediminis (strain HAW-EB3).